Consider the following 199-residue polypeptide: MSRTARIERSTSESSVLVELDLDGTGRTSIDTTVPFYDHMLTALGKHSLMDLTVVAKGDTHIDVHHTVEDTAIVLGQAFRQALGDKAGIRRFADATVPLDEALAHVVVDVSGRPYCVHTGEPEGQEYHLIGGHFTGSLTRHLLESFAFHARIALHVRVLAGRDPHHVVEAQFKALARALRYAVEPDPRVQGIPSTKGAL.

Belongs to the imidazoleglycerol-phosphate dehydratase family.

The protein resides in the cytoplasm. The enzyme catalyses D-erythro-1-(imidazol-4-yl)glycerol 3-phosphate = 3-(imidazol-4-yl)-2-oxopropyl phosphate + H2O. The protein operates within amino-acid biosynthesis; L-histidine biosynthesis; L-histidine from 5-phospho-alpha-D-ribose 1-diphosphate: step 6/9. The polypeptide is Imidazoleglycerol-phosphate dehydratase (Kineococcus radiotolerans (strain ATCC BAA-149 / DSM 14245 / SRS30216)).